The sequence spans 472 residues: NADH-quinone oxidoreductase subunit N (472 aa).

Transmembrane regions (helical) follow at residues 11-31 (AELS…FLPA), 43-63 (ILLT…LFGG), 67-87 (STPM…LVFL), 103-123 (GEFY…VSAG), 125-145 (FLLF…LVAF), 159-179 (FILS…MIYG), 200-220 (VLAL…VPFH), 234-254 (VSAY…MIIL), 265-285 (WSEI…LFAI), 293-313 (FMAF…LAGT), 318-338 (ASLV…FGVI), 362-384 (PKLT…FAGF), 401-421 (LIVF…LLIV), and 446-466 (LLVC…YQLL).

The protein belongs to the complex I subunit 2 family. In terms of assembly, NDH-1 is composed of 14 different subunits. Subunits NuoA, H, J, K, L, M, N constitute the membrane sector of the complex.

Its subcellular location is the cell inner membrane. It carries out the reaction a quinone + NADH + 5 H(+)(in) = a quinol + NAD(+) + 4 H(+)(out). In terms of biological role, NDH-1 shuttles electrons from NADH, via FMN and iron-sulfur (Fe-S) centers, to quinones in the respiratory chain. The immediate electron acceptor for the enzyme in this species is believed to be a menaquinone. Couples the redox reaction to proton translocation (for every two electrons transferred, four hydrogen ions are translocated across the cytoplasmic membrane), and thus conserves the redox energy in a proton gradient. The protein is NADH-quinone oxidoreductase subunit N of Phocaeicola vulgatus (strain ATCC 8482 / DSM 1447 / JCM 5826 / CCUG 4940 / NBRC 14291 / NCTC 11154) (Bacteroides vulgatus).